Reading from the N-terminus, the 222-residue chain is Probable GTP-binding protein EngB (222 aa).

In terms of domain architecture, EngB-type G spans 25 to 199 (AGVEVAFAGR…SQLLQNWFDT (175 aa)). GTP is bound by residues 33-40 (GRSNAGKS), 60-64 (GRTQH), 78-81 (DLPG), 145-148 (TKAD), and 178-180 (FSS). Mg(2+) is bound by residues Ser40 and Thr62.

It belongs to the TRAFAC class TrmE-Era-EngA-EngB-Septin-like GTPase superfamily. EngB GTPase family. Mg(2+) is required as a cofactor.

Functionally, necessary for normal cell division and for the maintenance of normal septation. The chain is Probable GTP-binding protein EngB from Nitrosomonas europaea (strain ATCC 19718 / CIP 103999 / KCTC 2705 / NBRC 14298).